The following is a 215-amino-acid chain: Cytochrome b6 (215 aa).

The chain crosses the membrane as a helical span at residues 32–52; it reads IFYCLGGITLTCFLVQVATGF. C35 serves as a coordination point for heme c. The heme b site is built by H86 and H100. The next 3 helical transmembrane spans lie at 90 to 110, 116 to 136, and 186 to 206; these read ASMMVLMMILHVFRVYLTGGF, LTWVTGVVLGVLTATFGVTGY, and LHTFVLPLLTAVFMLMHFLMI. H187 and H202 together coordinate heme b.

This sequence belongs to the cytochrome b family. PetB subfamily. The 4 large subunits of the cytochrome b6-f complex are cytochrome b6, subunit IV (17 kDa polypeptide, PetD), cytochrome f and the Rieske protein, while the 4 small subunits are PetG, PetL, PetM and PetN. The complex functions as a dimer. The cofactor is heme b. Heme c serves as cofactor.

It localises to the plastid. It is found in the chloroplast thylakoid membrane. Its function is as follows. Component of the cytochrome b6-f complex, which mediates electron transfer between photosystem II (PSII) and photosystem I (PSI), cyclic electron flow around PSI, and state transitions. This is Cytochrome b6 from Pisum sativum (Garden pea).